The following is a 203-amino-acid chain: 3-isopropylmalate dehydratase small subunit (203 aa).

It belongs to the LeuD family. LeuD type 1 subfamily. In terms of assembly, heterodimer of LeuC and LeuD.

The catalysed reaction is (2R,3S)-3-isopropylmalate = (2S)-2-isopropylmalate. Its pathway is amino-acid biosynthesis; L-leucine biosynthesis; L-leucine from 3-methyl-2-oxobutanoate: step 2/4. Functionally, catalyzes the isomerization between 2-isopropylmalate and 3-isopropylmalate, via the formation of 2-isopropylmaleate. The protein is 3-isopropylmalate dehydratase small subunit of Rhodospirillum centenum (strain ATCC 51521 / SW).